The following is a 498-amino-acid chain: ATP synthase subunit beta, chloroplastic (498 aa).

172-179 (GGAGVGKT) is a binding site for ATP.

This sequence belongs to the ATPase alpha/beta chains family. As to quaternary structure, F-type ATPases have 2 components, CF(1) - the catalytic core - and CF(0) - the membrane proton channel. CF(1) has five subunits: alpha(3), beta(3), gamma(1), delta(1), epsilon(1). CF(0) has four main subunits: a(1), b(1), b'(1) and c(9-12).

The protein resides in the plastid. It is found in the chloroplast thylakoid membrane. The enzyme catalyses ATP + H2O + 4 H(+)(in) = ADP + phosphate + 5 H(+)(out). Its function is as follows. Produces ATP from ADP in the presence of a proton gradient across the membrane. The catalytic sites are hosted primarily by the beta subunits. This is ATP synthase subunit beta, chloroplastic from Helianthus annuus (Common sunflower).